The chain runs to 190 residues: UPF0340 protein BT9727_4999 (190 aa).

This sequence belongs to the UPF0340 family.

The polypeptide is UPF0340 protein BT9727_4999 (Bacillus thuringiensis subsp. konkukian (strain 97-27)).